The chain runs to 414 residues: TBC domain-containing protein C1778.09 (414 aa).

The 186-residue stretch at Gly158 to Gly343 folds into the Rab-GAP TBC domain.

It localises to the cytoplasm. It is found in the nucleus. The sequence is that of TBC domain-containing protein C1778.09 from Schizosaccharomyces pombe (strain 972 / ATCC 24843) (Fission yeast).